The sequence spans 341 residues: L-threonine 3-dehydrogenase (341 aa).

A Zn(2+)-binding site is contributed by cysteine 38. Catalysis depends on charge relay system residues threonine 40 and histidine 43. Zn(2+) is bound by residues histidine 63, glutamate 64, cysteine 93, cysteine 96, cysteine 99, and cysteine 107. NAD(+) is bound by residues isoleucine 175, aspartate 195, arginine 200, 262-264, and 286-287; these read LGI and IY.

The protein belongs to the zinc-containing alcohol dehydrogenase family. As to quaternary structure, homotetramer. Zn(2+) serves as cofactor.

It is found in the cytoplasm. It carries out the reaction L-threonine + NAD(+) = (2S)-2-amino-3-oxobutanoate + NADH + H(+). The protein operates within amino-acid degradation; L-threonine degradation via oxydo-reductase pathway; glycine from L-threonine: step 1/2. Functionally, catalyzes the NAD(+)-dependent oxidation of L-threonine to 2-amino-3-ketobutyrate. The polypeptide is L-threonine 3-dehydrogenase (Cronobacter sakazakii (strain ATCC BAA-894) (Enterobacter sakazakii)).